The primary structure comprises 261 residues: uncharacterized protein (261 aa).

5 helical membrane passes run 38–58, 134–154, 163–183, 195–215, and 219–239; these read FIYLILGGFGFYQPSNLITLL, YTLMVSLVAIFQCLISLLALI, ILINLSLTLNFFLLLFNTYVL, YMGLIVSYIISLLDFSALFFL, and HKSVLSVISSIFSFFLMCLKV.

Its subcellular location is the membrane. This is an uncharacterized protein from Dictyostelium discoideum (Social amoeba).